The chain runs to 97 residues: U-reduvitoxin-Pr11a (97 aa).

Positions 1–20 (MKTALFLVFALAFIAVEGKM) are cleaved as a signal peptide. Pacifastin domains are found at residues 22–59 (RACS…CPPR) and 62–97 (EKSC…KLCL). Cystine bridges form between Cys-24–Cys-42, Cys-37–Cys-56, and Cys-40–Cys-51. The interval 57–59 (PPR) is pro-Pro-Arg motif necessary for proteolytic processing. 3 disulfides stabilise this stretch: Cys-65/Cys-82, Cys-77/Cys-96, and Cys-80/Cys-91.

It belongs to the protease inhibitor I19 family. As to expression, expressed by the venom gland.

Its subcellular location is the secreted. Functionally, inhibits trypsin activity and prophenoloxidase (PPO) activation, an enzyme essential for both clotting and insect innate immune responses. It does not inhibit activity of chymotrypsin and protease K, and has no effect on phenoloxidase (PO) activity. The protein is U-reduvitoxin-Pr11a of Platymeris rhadamanthus (Red spot assassin bug).